The chain runs to 264 residues: PDZ domain-containing protein 9 (264 aa).

In terms of domain architecture, PDZ spans 30–109 (QTKLTVGSLG…GTVLQIKVYR (80 aa)).

The chain is PDZ domain-containing protein 9 (PDZD9) from Homo sapiens (Human).